The primary structure comprises 64 residues: Protein DsrB (64 aa).

It belongs to the DsrB family.

In Salmonella enteritidis PT4 (strain P125109), this protein is Protein DsrB.